Here is a 771-residue protein sequence, read N- to C-terminus: Choline transporter-like protein 1 (771 aa).

The helical transmembrane segment at 96–116 threads the bilayer; sequence FLFFVFLCGWVVVAGFGIMWG. Asn-141 and Asn-259 each carry an N-linked (GlcNAc...) asparagine glycan. 4 helical membrane passes run 312–332, 335–355, 392–412, and 441–461; these read WWQT…WTVI, LLGS…LGFG, LVVA…ILFI, and LFPF…AIWL. N-linked (GlcNAc...) asparagine glycosylation is present at Asn-480. The next 5 helical transmembrane spans lie at 514-534, 566-586, 603-623, 662-682, and 701-721; these read LFAF…ALAG, LGSI…RVLL, WFLM…KFLT, AGIL…ILSF, and YYFV…DLFF.

It belongs to the CTL (choline transporter-like) family.

The protein resides in the membrane. This Caenorhabditis elegans protein is Choline transporter-like protein 1 (chtl-1).